Reading from the N-terminus, the 750-residue chain is Photosystem I P700 chlorophyll a apoprotein A1 (750 aa).

8 consecutive transmembrane segments (helical) span residues 70-93, 156-179, 195-219, 291-309, 346-369, 385-411, 433-455, and 531-549; these read VFSA…FHGA, LYCT…FHYH, LNHH…HVSL, IAHH…GHMY, WHAQ…HHMY, LSLF…IFMV, AIIS…LYIH, and FLVH…LILL. Residues cysteine 573 and cysteine 582 each contribute to the [4Fe-4S] cluster site. Helical transmembrane passes span 589 to 610 and 664 to 686; these read HVFL…HFSW and LSAY…MFLF. Histidine 675 provides a ligand contact to chlorophyll a'. Residues methionine 683 and tyrosine 691 each coordinate chlorophyll a. Tryptophan 692 is a binding site for phylloquinone. Residues 724-744 form a helical membrane-spanning segment; sequence AVGVTHYLLGGIATTWAFFLA.

This sequence belongs to the PsaA/PsaB family. The PsaA/B heterodimer binds the P700 chlorophyll special pair and subsequent electron acceptors. PSI consists of a core antenna complex that captures photons, and an electron transfer chain that converts photonic excitation into a charge separation. The eukaryotic PSI reaction center is composed of at least 11 subunits. The cofactor is P700 is a chlorophyll a/chlorophyll a' dimer, A0 is one or more chlorophyll a, A1 is one or both phylloquinones and FX is a shared 4Fe-4S iron-sulfur center..

The protein localises to the plastid. It localises to the chloroplast thylakoid membrane. It carries out the reaction reduced [plastocyanin] + hnu + oxidized [2Fe-2S]-[ferredoxin] = oxidized [plastocyanin] + reduced [2Fe-2S]-[ferredoxin]. PsaA and PsaB bind P700, the primary electron donor of photosystem I (PSI), as well as the electron acceptors A0, A1 and FX. PSI is a plastocyanin-ferredoxin oxidoreductase, converting photonic excitation into a charge separation, which transfers an electron from the donor P700 chlorophyll pair to the spectroscopically characterized acceptors A0, A1, FX, FA and FB in turn. Oxidized P700 is reduced on the lumenal side of the thylakoid membrane by plastocyanin. This chain is Photosystem I P700 chlorophyll a apoprotein A1, found in Coffea arabica (Arabian coffee).